An 80-amino-acid polypeptide reads, in one-letter code: U-actitoxin-Avd9b (80 aa).

The N-terminal stretch at 1 to 20 (MNLKVLAVFVLCAILVVVTA) is a signal peptide. Positions 21 to 39 (ERRGTETGGYKKDTLQDLK) are excised as a propeptide. The ShKT domain maps to 45-80 (CFDRYREAACTSDNIRLLCKTSAKYQINCKKSCGLC). 3 disulfide bridges follow: Cys-45–Cys-80, Cys-54–Cys-73, and Cys-63–Cys-77. The tract at residues 68 to 69 (KY) is crucial for binding to potassium channels.

This sequence belongs to the sea anemone type 1 potassium channel toxin family. Type 1b subfamily.

Its subcellular location is the secreted. The protein resides in the nematocyst. Its function is as follows. Inhibits voltage-gated potassium channels (Kv1/KCNA). The protein is U-actitoxin-Avd9b of Anemonia viridis (Snakelocks anemone).